A 355-amino-acid chain; its full sequence is Phenylalanine--tRNA ligase alpha subunit (355 aa).

Glutamate 273 contributes to the Mg(2+) binding site.

Belongs to the class-II aminoacyl-tRNA synthetase family. Phe-tRNA synthetase alpha subunit type 1 subfamily. As to quaternary structure, tetramer of two alpha and two beta subunits. Mg(2+) is required as a cofactor.

Its subcellular location is the cytoplasm. The catalysed reaction is tRNA(Phe) + L-phenylalanine + ATP = L-phenylalanyl-tRNA(Phe) + AMP + diphosphate + H(+). This Bifidobacterium longum (strain NCC 2705) protein is Phenylalanine--tRNA ligase alpha subunit.